Consider the following 209-residue polypeptide: Uracil phosphoribosyltransferase (209 aa).

5-phospho-alpha-D-ribose 1-diphosphate-binding positions include Arg-79, Arg-104, and Asp-131–Ser-139. Residues Ile-194 and Gly-199–Ala-201 each bind uracil. Asp-200 serves as a coordination point for 5-phospho-alpha-D-ribose 1-diphosphate.

This sequence belongs to the UPRTase family. It depends on Mg(2+) as a cofactor.

It catalyses the reaction UMP + diphosphate = 5-phospho-alpha-D-ribose 1-diphosphate + uracil. It participates in pyrimidine metabolism; UMP biosynthesis via salvage pathway; UMP from uracil: step 1/1. Allosterically activated by GTP. Its function is as follows. Catalyzes the conversion of uracil and 5-phospho-alpha-D-ribose 1-diphosphate (PRPP) to UMP and diphosphate. This chain is Uracil phosphoribosyltransferase, found in Streptococcus sanguinis (strain SK36).